Consider the following 212-residue polypeptide: GTP-binding nuclear protein Ran (212 aa).

The Small GTPase Ran-type domain maps to 3-167 (EKEQIKLVLV…VWLTSKLLGN (165 aa)). 14–21 (DGGVGKTT) provides a ligand contact to GTP. The switch-I stretch occupies residues 33-41 (PRYIPTLGV). GTP-binding positions include glycine 64, 118 to 121 (NKVD), and 146 to 148 (SAK). The segment at 64 to 80 (GQEKFGGLRDGYYIQGN) is switch-II.

Belongs to the small GTPase superfamily. Ran family. As to quaternary structure, found in a nuclear export complex with RanGTP, exportin and pre-miRNA.

The protein localises to the nucleus. Functionally, GTP-binding protein involved in nucleocytoplasmic transport. Required for the import of protein into the nucleus and also for RNA export. Involved in chromatin condensation and control of cell cycle. This is GTP-binding nuclear protein Ran (ranA) from Dictyostelium discoideum (Social amoeba).